The chain runs to 206 residues: Small ribosomal subunit protein eS8 (206 aa).

The interval 1–37 is disordered; it reads MGISRDSRHKRSATGAKRAQFRKKRKFELGRQPANTK.

The protein belongs to the eukaryotic ribosomal protein eS8 family. In terms of assembly, component of the small ribosomal subunit. Mature ribosomes consist of a small (40S) and a large (60S) subunit. The 40S subunit contains about 32 different proteins and 1 molecule of RNA (18S). The 60S subunit contains 45 different proteins and 3 molecules of RNA (25S, 5.8S and 5S).

It is found in the cytoplasm. In terms of biological role, component of the ribosome, a large ribonucleoprotein complex responsible for the synthesis of proteins in the cell. The small ribosomal subunit (SSU) binds messenger RNAs (mRNAs) and translates the encoded message by selecting cognate aminoacyl-transfer RNA (tRNA) molecules. The large subunit (LSU) contains the ribosomal catalytic site termed the peptidyl transferase center (PTC), which catalyzes the formation of peptide bonds, thereby polymerizing the amino acids delivered by tRNAs into a polypeptide chain. The nascent polypeptides leave the ribosome through a tunnel in the LSU and interact with protein factors that function in enzymatic processing, targeting, and the membrane insertion of nascent chains at the exit of the ribosomal tunnel. This is Small ribosomal subunit protein eS8 (RPS8A) from Candida albicans (strain SC5314 / ATCC MYA-2876) (Yeast).